A 215-amino-acid chain; its full sequence is Methylthioribulose-1-phosphate dehydratase (215 aa).

His103 and His105 together coordinate Zn(2+).

This sequence belongs to the aldolase class II family. MtnB subfamily. It depends on Zn(2+) as a cofactor.

The catalysed reaction is 5-(methylsulfanyl)-D-ribulose 1-phosphate = 5-methylsulfanyl-2,3-dioxopentyl phosphate + H2O. It participates in amino-acid biosynthesis; L-methionine biosynthesis via salvage pathway; L-methionine from S-methyl-5-thio-alpha-D-ribose 1-phosphate: step 2/6. Functionally, catalyzes the dehydration of methylthioribulose-1-phosphate (MTRu-1-P) into 2,3-diketo-5-methylthiopentyl-1-phosphate (DK-MTP-1-P). In Sulfurihydrogenibium sp. (strain YO3AOP1), this protein is Methylthioribulose-1-phosphate dehydratase.